We begin with the raw amino-acid sequence, 240 residues long: GATA transcription factor 4 (240 aa).

A disordered region spans residues 104 to 124; that stretch reads ISFTGKPRSRRSRAPAPSVAG. The short motif at 109-116 is the Nuclear localization signal element; sequence KPRSRRSR. The GATA-type zinc finger occupies 154-208; that stretch reads ADGARRCTHCASEKTPQWRTGPLGPKTLCNACGVRYKSGRLVPEYRPASSPTFVL.

Belongs to the type IV zinc-finger family. Class A subfamily. In terms of tissue distribution, expressed in roots, flowers and leaves, and to a lower extent in stems.

It localises to the nucleus. Its function is as follows. Transcriptional activator that specifically binds 5'-GATA-3' or 5'-GAT-3' motifs within gene promoters. May be involved in the regulation of some light-responsive genes. The protein is GATA transcription factor 4 (GATA4) of Arabidopsis thaliana (Mouse-ear cress).